Reading from the N-terminus, the 713-residue chain is Polyribonucleotide nucleotidyltransferase (713 aa).

The Mg(2+) site is built by D498 and D504. The region spanning 565–631 (PRILSLKVPV…RIEDLTREAK (67 aa)) is the KH domain. The 69-residue stretch at 633 to 701 (GEIYEGTVTR…ERGKIDLIRP (69 aa)) folds into the S1 motif domain.

Belongs to the polyribonucleotide nucleotidyltransferase family. The cofactor is Mg(2+).

It is found in the cytoplasm. The enzyme catalyses RNA(n+1) + phosphate = RNA(n) + a ribonucleoside 5'-diphosphate. Its function is as follows. Involved in mRNA degradation. Catalyzes the phosphorolysis of single-stranded polyribonucleotides processively in the 3'- to 5'-direction. The chain is Polyribonucleotide nucleotidyltransferase from Thermus thermophilus.